The primary structure comprises 250 residues: Ubiquinone/menaquinone biosynthesis C-methyltransferase UbiE (250 aa).

S-adenosyl-L-methionine-binding positions include T74, D94, 122-123 (DA), and S139.

Belongs to the class I-like SAM-binding methyltransferase superfamily. MenG/UbiE family.

It carries out the reaction a 2-demethylmenaquinol + S-adenosyl-L-methionine = a menaquinol + S-adenosyl-L-homocysteine + H(+). The catalysed reaction is a 2-methoxy-6-(all-trans-polyprenyl)benzene-1,4-diol + S-adenosyl-L-methionine = a 5-methoxy-2-methyl-3-(all-trans-polyprenyl)benzene-1,4-diol + S-adenosyl-L-homocysteine + H(+). The protein operates within quinol/quinone metabolism; menaquinone biosynthesis; menaquinol from 1,4-dihydroxy-2-naphthoate: step 2/2. Its pathway is cofactor biosynthesis; ubiquinone biosynthesis. In terms of biological role, methyltransferase required for the conversion of demethylmenaquinol (DMKH2) to menaquinol (MKH2) and the conversion of 2-polyprenyl-6-methoxy-1,4-benzoquinol (DDMQH2) to 2-polyprenyl-3-methyl-6-methoxy-1,4-benzoquinol (DMQH2). This is Ubiquinone/menaquinone biosynthesis C-methyltransferase UbiE from Roseobacter denitrificans (strain ATCC 33942 / OCh 114) (Erythrobacter sp. (strain OCh 114)).